The sequence spans 119 residues: V-type proton ATPase subunit F (119 aa).

It belongs to the V-ATPase F subunit family. V-ATPase is a heteromultimeric enzyme composed of a peripheral catalytic V1 complex (components A to H) attached to an integral membrane V0 proton pore complex (components: a, c, c', c'', d, e, f and VOA1).

It localises to the vacuole membrane. Its function is as follows. Subunit of the V1 complex of vacuolar(H+)-ATPase (V-ATPase), a multisubunit enzyme composed of a peripheral complex (V1) that hydrolyzes ATP and a membrane integral complex (V0) that translocates protons. V-ATPase is responsible for acidifying and maintaining the pH of intracellular compartments. The chain is V-type proton ATPase subunit F (VMA7) from Vanderwaltozyma polyspora (strain ATCC 22028 / DSM 70294 / BCRC 21397 / CBS 2163 / NBRC 10782 / NRRL Y-8283 / UCD 57-17) (Kluyveromyces polysporus).